Here is a 354-residue protein sequence, read N- to C-terminus: Protein RecA (354 aa).

Residue Gly-67–Thr-74 coordinates ATP.

This sequence belongs to the RecA family.

The protein resides in the cytoplasm. In terms of biological role, can catalyze the hydrolysis of ATP in the presence of single-stranded DNA, the ATP-dependent uptake of single-stranded DNA by duplex DNA, and the ATP-dependent hybridization of homologous single-stranded DNAs. It interacts with LexA causing its activation and leading to its autocatalytic cleavage. In Enterobacter agglomerans (Erwinia herbicola), this protein is Protein RecA.